A 348-amino-acid chain; its full sequence is Ion-translocating oxidoreductase complex subunit D (348 aa).

3 consecutive transmembrane segments (helical) span residues 20-39 (LMKW…TYFF), 72-91 (ALRD…AIPP), and 120-140 (PFNP…VQMT). Thr187 is modified (FMN phosphoryl threonine). 5 consecutive transmembrane segments (helical) span residues 214 to 234 (LAGV…LVLI), 241 to 261 (WHIP…FLMF), 266 to 286 (TASP…FFIA), 300 to 320 (LVFG…GGFP), and 321 to 341 (DGVA…DYYT).

This sequence belongs to the NqrB/RnfD family. As to quaternary structure, the complex is composed of six subunits: RnfA, RnfB, RnfC, RnfD, RnfE and RnfG. Requires FMN as cofactor.

It is found in the cell inner membrane. Part of a membrane-bound complex that couples electron transfer with translocation of ions across the membrane. This is Ion-translocating oxidoreductase complex subunit D from Vibrio atlanticus (strain LGP32) (Vibrio splendidus (strain Mel32)).